The sequence spans 374 residues: SH2 domain-containing protein 2A (374 aa).

The SH2 domain maps to 116 to 207; the sequence is WFHGFITRRE…PYGEILTQPL (92 aa). The disordered stretch occupies residues 213–232; the sequence is EPAGLSLRADSDSGSKRQDP. A compositionally biased stretch (basic and acidic residues) spans 221-232; the sequence is ADSDSGSKRQDP. Position 237 is a phosphoserine (Ser237). Positions 241–301 are disordered; that stretch reads QQGQAQASGH…QAPPINPIYQ (61 aa). Polar residues predominate over residues 256-266; it reads ASQQKATSQAS. The SH3-binding motif lies at 267–273; it reads RPRPPIP. Positions 268-279 are enriched in pro residues; it reads PRPPIPAKPQLP. The residue at position 316 (Ser316) is a Phosphoserine. Disordered stretches follow at residues 321–340 and 353–374; these read PSNI…IGHP and GQVR…GSPS.

Interacts with KDR. Interacts with p56-LCK, TXK and ITK. In terms of processing, phosphorylated on tyrosine residues upon TCR-stimulation. In terms of tissue distribution, expression limited to tissues of the immune system and, in particular, activated T-cells and natural killer cells. Expressed in the thymus, lymph node, and to a lesser extent, in the spleen and bone marrow. According to PubMed:10553045, also expressed in the lung.

The protein localises to the cytoplasm. The protein resides in the cell membrane. In terms of biological role, could be a T-cell-specific adapter protein involved in the control of T-cell activation. May play a role in p56-LCK-mediated T-cell signaling. Could be involved in the regulation of responses to T-cell activation stimuli, specifically proliferation and lymphokine production. Interactions with ITK and TXK may provide important biochemical links of these two important kinases with other components in the T-cell activation machinery. This Mus musculus (Mouse) protein is SH2 domain-containing protein 2A (Sh2d2a).